The sequence spans 424 residues: Tyrosine--tRNA ligase (424 aa).

L-tyrosine is bound at residue tyrosine 37. The short motif at proline 42–histidine 51 is the 'HIGH' region element. Residues tyrosine 175 and glutamine 179 each contribute to the L-tyrosine site. The short motif at lysine 235–threonine 239 is the 'KMSKS' region element. Lysine 238 provides a ligand contact to ATP. Residues alanine 357 to glycine 414 enclose the S4 RNA-binding domain.

It belongs to the class-I aminoacyl-tRNA synthetase family. TyrS type 1 subfamily. Homodimer.

It localises to the cytoplasm. The enzyme catalyses tRNA(Tyr) + L-tyrosine + ATP = L-tyrosyl-tRNA(Tyr) + AMP + diphosphate + H(+). Its function is as follows. Catalyzes the attachment of tyrosine to tRNA(Tyr) in a two-step reaction: tyrosine is first activated by ATP to form Tyr-AMP and then transferred to the acceptor end of tRNA(Tyr). The chain is Tyrosine--tRNA ligase from Hamiltonella defensa subsp. Acyrthosiphon pisum (strain 5AT).